The chain runs to 556 residues: Urocanate hydratase (556 aa).

Residues 52-53, Q130, 176-178, E196, R201, 242-243, 263-267, 273-274, and Y322 each bind NAD(+); these read GG, GMG, NA, QTSAH, and YL. Residue C410 is part of the active site. Residue G492 coordinates NAD(+).

It belongs to the urocanase family. NAD(+) is required as a cofactor.

It localises to the cytoplasm. It catalyses the reaction 4-imidazolone-5-propanoate = trans-urocanate + H2O. The protein operates within amino-acid degradation; L-histidine degradation into L-glutamate; N-formimidoyl-L-glutamate from L-histidine: step 2/3. Functionally, catalyzes the conversion of urocanate to 4-imidazolone-5-propionate. This Acidiphilium cryptum (strain JF-5) protein is Urocanate hydratase.